The following is a 190-amino-acid chain: Probable nicotinate-nucleotide adenylyltransferase (190 aa).

This sequence belongs to the NadD family.

It carries out the reaction nicotinate beta-D-ribonucleotide + ATP + H(+) = deamido-NAD(+) + diphosphate. It participates in cofactor biosynthesis; NAD(+) biosynthesis; deamido-NAD(+) from nicotinate D-ribonucleotide: step 1/1. Catalyzes the reversible adenylation of nicotinate mononucleotide (NaMN) to nicotinic acid adenine dinucleotide (NaAD). The chain is Probable nicotinate-nucleotide adenylyltransferase from Frankia alni (strain DSM 45986 / CECT 9034 / ACN14a).